The following is a 284-amino-acid chain: L-ribulose-5-phosphate 3-epimerase UlaE (284 aa).

It belongs to the L-ribulose-5-phosphate 3-epimerase family.

The catalysed reaction is L-ribulose 5-phosphate = L-xylulose 5-phosphate. Its pathway is cofactor degradation; L-ascorbate degradation; D-xylulose 5-phosphate from L-ascorbate: step 3/4. Functionally, catalyzes the isomerization of L-xylulose-5-phosphate to L-ribulose-5-phosphate. Is involved in the anaerobic L-ascorbate utilization. The sequence is that of L-ribulose-5-phosphate 3-epimerase UlaE from Escherichia coli O17:K52:H18 (strain UMN026 / ExPEC).